The chain runs to 429 residues: Patatin-like phospholipase domain-containing protein 5 (429 aa).

One can recognise a PNPLA domain in the interval 12–181 (LSFSGAGYLG…SNNLPFADCP (170 aa)). Residues 16 to 21 (GAGYLG) carry the GXGXXG motif. The short motif at 47 to 51 (GSSSG) is the GXSXG element. Serine 49 acts as the Nucleophile in catalysis. Aspartate 168 serves as the catalytic Proton acceptor. Positions 168 to 170 (DGA) match the DGA/G motif.

In terms of tissue distribution, expressed in brain and pituitary gland.

It carries out the reaction a triacylglycerol + H2O = a diacylglycerol + a fatty acid + H(+). In terms of biological role, has abundant triacylglycerol lipase activity. The sequence is that of Patatin-like phospholipase domain-containing protein 5 from Homo sapiens (Human).